A 258-amino-acid chain; its full sequence is Imidazole glycerol phosphate synthase subunit HisF (258 aa).

Catalysis depends on residues D11 and D130.

It belongs to the HisA/HisF family. In terms of assembly, heterodimer of HisH and HisF.

It localises to the cytoplasm. It carries out the reaction 5-[(5-phospho-1-deoxy-D-ribulos-1-ylimino)methylamino]-1-(5-phospho-beta-D-ribosyl)imidazole-4-carboxamide + L-glutamine = D-erythro-1-(imidazol-4-yl)glycerol 3-phosphate + 5-amino-1-(5-phospho-beta-D-ribosyl)imidazole-4-carboxamide + L-glutamate + H(+). It participates in amino-acid biosynthesis; L-histidine biosynthesis; L-histidine from 5-phospho-alpha-D-ribose 1-diphosphate: step 5/9. Its function is as follows. IGPS catalyzes the conversion of PRFAR and glutamine to IGP, AICAR and glutamate. The HisF subunit catalyzes the cyclization activity that produces IGP and AICAR from PRFAR using the ammonia provided by the HisH subunit. The polypeptide is Imidazole glycerol phosphate synthase subunit HisF (Photorhabdus laumondii subsp. laumondii (strain DSM 15139 / CIP 105565 / TT01) (Photorhabdus luminescens subsp. laumondii)).